The chain runs to 778 residues: Ent-sandaracopimaradiene synthase KSL3, chloroplastic (778 aa).

The transit peptide at 1 to 35 (MLLTSTNTLKISSQRKEWEAKDLTGMFHGQVNGRV) directs the protein to the chloroplast. Mg(2+)-binding residues include Asp527, Glu531, Asn670, Asp671, and Asp678. The short motif at 527 to 531 (DDFFE) is the DDXXD motif element.

It belongs to the terpene synthase family. The cofactor is Mg(2+).

The protein localises to the plastid. It is found in the chloroplast. The enzyme catalyses ent-copalyl diphosphate = ent-sandaracopimara-8(14),15-diene + diphosphate. It carries out the reaction ent-copalyl diphosphate = ent-(12E)-labda-8(17),12,14-triene + diphosphate. It functions in the pathway secondary metabolite biosynthesis; terpenoid biosynthesis. Its function is as follows. Diterpene cyclase involved in the biosynthesis of labdane-related diterpenoids (LRDs) natural products. Catalyzes the cyclization of ent-CDP into ent-sandaracopimaradiene as a major, and ent-pimaradiene and ent-labdatriene as minor products. In Ricinus communis (Castor bean), this protein is Ent-sandaracopimaradiene synthase KSL3, chloroplastic.